We begin with the raw amino-acid sequence, 231 residues long: Aquaporin Z (231 aa).

Transmembrane regions (helical) follow at residues 9-29 (CFGTFWLVFGGCGSAVLAAGF) and 34-54 (IGFAGVALAFGLTVLTMAFAV). The NPA 1 motif lies at 63-65 (NPA). A run of 3 helical transmembrane segments spans residues 82–102 (VGYVIAQVVGGIVAAALLYLI), 129–149 (YSMLSALVVELVLSAGFLLVI), and 156–176 (FAPAGFAPIAIGLALTLIHLI). The NPA 2 motif lies at 186–188 (NPA). Residues 202–222 (LEQLWFFWVVPIVGGIIGGLI) traverse the membrane as a helical segment.

This sequence belongs to the MIP/aquaporin (TC 1.A.8) family. As to quaternary structure, homotetramer.

Its subcellular location is the cell inner membrane. It carries out the reaction H2O(in) = H2O(out). Its function is as follows. Channel that permits osmotically driven movement of water in both directions. It is involved in the osmoregulation and in the maintenance of cell turgor during volume expansion in rapidly growing cells. It mediates rapid entry or exit of water in response to abrupt changes in osmolarity. This is Aquaporin Z from Escherichia coli O6:H1 (strain CFT073 / ATCC 700928 / UPEC).